Here is a 417-residue protein sequence, read N- to C-terminus: Gamma-glutamyl phosphate reductase (417 aa).

Belongs to the gamma-glutamyl phosphate reductase family.

It localises to the cytoplasm. It catalyses the reaction L-glutamate 5-semialdehyde + phosphate + NADP(+) = L-glutamyl 5-phosphate + NADPH + H(+). It functions in the pathway amino-acid biosynthesis; L-proline biosynthesis; L-glutamate 5-semialdehyde from L-glutamate: step 2/2. Its function is as follows. Catalyzes the NADPH-dependent reduction of L-glutamate 5-phosphate into L-glutamate 5-semialdehyde and phosphate. The product spontaneously undergoes cyclization to form 1-pyrroline-5-carboxylate. The chain is Gamma-glutamyl phosphate reductase from Escherichia coli O8 (strain IAI1).